Consider the following 101-residue polypeptide: MAKTSMVNRDIKREKLAKKYAEKRAALKKIVSSVDATYEEKIDAATKLAKLPRDSSPSRQRNRCELSGRPRGVYSKFGLGRNKLREATMRGDVPGLRKASW.

The protein belongs to the universal ribosomal protein uS14 family. Part of the 30S ribosomal subunit. Contacts proteins S3 and S10.

Binds 16S rRNA, required for the assembly of 30S particles and may also be responsible for determining the conformation of the 16S rRNA at the A site. In Stenotrophomonas maltophilia (strain K279a), this protein is Small ribosomal subunit protein uS14.